Consider the following 397-residue polypeptide: Polyphosphatase (397 aa).

Mg(2+)-binding residues include D41, D127, and H148. Residues D41, D127, and H148 each coordinate Mn(2+). Residues H149, S286, and R381 each coordinate ATP.

The protein belongs to the PPase class C family. The cofactor is Mn(2+). Mg(2+) serves as cofactor.

It carries out the reaction [phosphate](n) + H2O = [phosphate](n-1) + phosphate + H(+). In terms of biological role, polyphosphatase (polyPase) involved in the degradation of inorganic polyphosphates (polyP) that is able to degrade a range of chains from three to several hundreds of residues in a highly processive manner. Exclusively shows exopolyphosphatase activity, cleaving inside the polyP chain. This chain is Polyphosphatase, found in Saccharomyces cerevisiae (strain ATCC 204508 / S288c) (Baker's yeast).